Consider the following 504-residue polypeptide: UDP-N-acetylmuramoylalanine--D-glutamate ligase (504 aa).

129 to 135 (GTNGKTT) contacts ATP.

It belongs to the MurCDEF family.

It localises to the cytoplasm. The enzyme catalyses UDP-N-acetyl-alpha-D-muramoyl-L-alanine + D-glutamate + ATP = UDP-N-acetyl-alpha-D-muramoyl-L-alanyl-D-glutamate + ADP + phosphate + H(+). The protein operates within cell wall biogenesis; peptidoglycan biosynthesis. Cell wall formation. Catalyzes the addition of glutamate to the nucleotide precursor UDP-N-acetylmuramoyl-L-alanine (UMA). The protein is UDP-N-acetylmuramoylalanine--D-glutamate ligase of Cupriavidus metallidurans (strain ATCC 43123 / DSM 2839 / NBRC 102507 / CH34) (Ralstonia metallidurans).